Consider the following 470-residue polypeptide: Pancreatic lipase-related protein 2 (470 aa).

The first 18 residues, 1-18 (MMLFVWTTGLLLLATARG), serve as a signal peptide directing secretion. Cys22 and Cys28 are disulfide-bonded. Positions 94-106 (IHGFIDNGEKDWL) are required for galactolipase activity. An intrachain disulfide couples Cys110 to Cys121. Ser172 functions as the Nucleophile in the catalytic mechanism. Catalysis depends on Asp196, which acts as the Charge relay system. Ca(2+)-binding residues include Glu207, Arg210, Asp212, and Asp215. A disulfide bridge connects residues Cys257 and Cys281. The segment at 258-280 (EKNIISTIVDVNGFLEGITSLAA) is required for galactolipase activity. Residue His283 is the Charge relay system of the active site. Cystine bridges form between Cys305-Cys316 and Cys319-Cys324. N-linked (GlcNAc...) asparagine glycans are attached at residues Asn354 and Asn429. A PLAT domain is found at 358–470 (WRYKVSVTLS…EDVLQSLSPC (113 aa)). Cys454 and Cys470 form a disulfide bridge.

It belongs to the AB hydrolase superfamily. Lipase family. In terms of tissue distribution, pancreas.

The protein localises to the secreted. The protein resides in the zymogen granule membrane. It localises to the cell projection. Its subcellular location is the neuron projection. It carries out the reaction a triacylglycerol + H2O = a diacylglycerol + a fatty acid + H(+). The enzyme catalyses a 1,2-diacyl-3-O-(beta-D-galactosyl)-sn-glycerol + 2 H2O = 3-beta-D-galactosyl-sn-glycerol + 2 a fatty acid + 2 H(+). It catalyses the reaction 1,2,3-tri-(9Z-octadecenoyl)-glycerol + H2O = di-(9Z)-octadecenoylglycerol + (9Z)-octadecenoate + H(+). The catalysed reaction is di-(9Z)-octadecenoylglycerol + H2O = (9Z-octadecenoyl)-glycerol + (9Z)-octadecenoate + H(+). It carries out the reaction (9Z-octadecenoyl)-glycerol + H2O = glycerol + (9Z)-octadecenoate + H(+). The enzyme catalyses 1-(9Z-octadecenoyl)-glycerol + H2O = glycerol + (9Z)-octadecenoate + H(+). It catalyses the reaction 1,2,3-tripropanoylglycerol + H2O = dipropanoylglycerol + propanoate + H(+). The catalysed reaction is 1,2,3-tributanoylglycerol + H2O = dibutanoylglycerol + butanoate + H(+). It carries out the reaction 1,2,3-trioctanoylglycerol + H2O = dioctanoylglycerol + octanoate + H(+). The enzyme catalyses 1,2-didecanoylglycerol + H2O = decanoylglycerol + decanoate + H(+). It catalyses the reaction long chain 1,2-diacyl-3-O-beta-D-galactosyl-sn-glycerol + H2O = long chain acyl-3-O-beta-D-galactosyl-sn-glycerol + a fatty acid + H(+). The catalysed reaction is 1,2-dioctanoyl-3-O-beta-D-galactosyl-sn-glycerol + H2O = octanoyl-3-(beta-D-galactosyl)-sn-glycerol + octanoate + H(+). It carries out the reaction 1,2-didodecanoyl-3-beta-D-galactosyl-sn-glycerol + H2O = dodecanoyl-3-beta-D-galactosyl-sn-glycerol + dodecanoate + H(+). The enzyme catalyses 1-beta-D-galactosyl-2,3-didodecanoyl-sn-glycerol + H2O = 1-beta-D-galactosyl-dodecanoyl-sn-glycerol + dodecanoate + H(+). It catalyses the reaction a 1,2-diacyl-3-O-[alpha-D-galactosyl-(1-&gt;6)-beta-D-galactosyl]-sn-glycerol + H2O = acyl-3-O-[alpha-D-galactosyl-(1-&gt;6)-beta-D-galactosyl]-sn-glycerol + a fatty acid + H(+). The catalysed reaction is long chain 1,2-diacyl-3-O-[alpha-D-galactosyl-(1-&gt;6)-beta-D-galactosyl]-sn-glycerol + H2O = long chain acyl-3-O-[alpha-D-galactosyl-(1-&gt;6)-beta-D-galactosyl]-sn-glycerol + a fatty acid + H(+). It carries out the reaction 1,2-dioctanoyl-3-O-[alpha-D-galactosyl-(1-&gt;6)-beta-D-galactosyl]-sn-glycerol + H2O = octanoyl-3-O-[alpha-D-galactosyl-(1-&gt;6)-beta-D-galactosyl]-sn-glycerol + octanoate + H(+). The enzyme catalyses 1,2-didodecanoyl-3-O-[alpha-D-galactosyl-(1-&gt;6)-beta-D-galactosyl]-sn-glycerol + H2O = dodecanoyl-3-O-[alpha-D-galactosyl-(1-&gt;6)-beta-D-galactosyl]-sn-glycerol + dodecanoate + H(+). It catalyses the reaction a 1,2-diacyl-sn-glycero-3-phosphocholine + H2O = a monoacyl-sn-glycero-3-phosphocholine + a fatty acid + H(+). Its pathway is glycerolipid metabolism; triacylglycerol degradation. It participates in glycolipid metabolism. Triacylglycerol lipase activity is inhibited by increasing bile salts concentrations and not reactivated by CLPS. In terms of biological role, lipase that primarily hydrolyzes triglycerides and galactosylglycerides. In neonates, may play a major role in pancreatic digestion of dietary fats such as milk fat globules enriched in long-chain triglycerides. Hydrolyzes short-, medium- and long-chain fatty acyls in triglycerides without apparent positional specificity. Can completely deacylate triacylglycerols. When the liver matures and bile salt synthesis increases, likely functions mainly as a galactolipase and monoacylglycerol lipase. Hydrolyzes monogalactosyldiglycerols (MGDG) and digalactosyldiacylglycerols (DGDG) present in a plant-based diet, releasing long-chain polyunsaturated fatty acids. Hydrolyzes medium- and long-chain fatty acyls in galactolipids. May act together with LIPF to hydrolyze partially digested triglycerides. Hydrolyzes long-chain monoglycerides with high efficiency. In cytotoxic T cells, contributes to perforin-dependent cell lysis, but is unlikely to mediate direct cytotoxicity. Also has low phospholipase activity. In neurons, required for the localization of the phospholipid 1-oleoyl-2-palmitoyl-PC (OPPC) to neurite tips through acyl chain remodeling of membrane phospholipids. The resulting OPPC-rich lipid membrane domain recruits the t-SNARE protein STX4 by selectively interacting with the STX4 transmembrane domain and this promotes surface expression of the dopamine transporter SLC6A3/DAT at neurite tips by facilitating fusion of SLC6A3-containing transport vesicles with the plasma membrane. The chain is Pancreatic lipase-related protein 2 from Myocastor coypus (Coypu).